A 337-amino-acid chain; its full sequence is Membrane-spanning 4-domains subfamily A member 18 (337 aa).

The segment at 101 to 121 is disordered; sequence LGTTDLQTQPGGPQNPPTCAP. 4 helical membrane-spanning segments follow: residues 155–175, 183–203, 220–240, and 252–272; these read LGAIQILIGLTHIFTAINPSL, AISGYLVWGGIFFIISGSLSV, MNVVSAIVSLAGVLLLLVDLI, and GGLLPFVLLEFCLTCVVSHFG.

Belongs to the MS4A family.

Its subcellular location is the membrane. This is Membrane-spanning 4-domains subfamily A member 18 (MS4A18) from Bos taurus (Bovine).